The primary structure comprises 591 residues: MNQGKIITVSGPLVVASGMQEANIQDICRVGHLGLVGEIIEMRRDQASIQVYEETSGIGPGEPVVTTGCPLSVELGPGLISEMFDGIQRPLDRFQKATDSDFLIRGVAIPSLDRKAKWAFIPKLSVGQEVVAGDILGTVQETAVIEHRVMVPYKVSGTLVAIHAGDFTVTDTVYEIKQEDGSIYQGSLMQTWPVRQSRPVAQKLIPVEPLVTGQRVIDTFFPVTKGGAAAVPGPFGAGKTVVQHQIAKFANVDIVIYVGCGERGNEMTDVLNEFPELIDPNTGQSIMERTVLIANTSNMPVAAREASIYTGITIAEYFRDMGYSVAIMADSTSRWAEALREMSGRLQEIPGDEGYPAYLGSRIAEYYERAGRVRTLGSQEREGTITAIGAVSPPGGDISEPVTQNTLRIVKVFWGLDAPLAQRRHFPAINWLTSYSLYQDDVGSYIDRKQQSNWSNKVTRAMAILQREASLEEIVRLVGLDSLSEQDRLIMAVARQIREDYLQQNAFDSVDTFTSFPKQEAMLTNILTFNEEASKALSLGAYFNEIMEGTAQVRDRIARSKFIPEENLEQIKGLTQKVTKEIHHVLAKGGI.

Residue 233-240 (GPFGAGKT) participates in ATP binding.

The protein belongs to the ATPase alpha/beta chains family.

It carries out the reaction ATP + H2O + 4 H(+)(in) = ADP + phosphate + 5 H(+)(out). Functionally, produces ATP from ADP in the presence of a proton gradient across the membrane. The V-type alpha chain is a catalytic subunit. The polypeptide is V-type ATP synthase alpha chain (Streptococcus pyogenes serotype M49 (strain NZ131)).